Here is a 79-residue protein sequence, read N- to C-terminus: RNA-binding protein Hfq (79 aa).

The 61-residue stretch at 10-70 (DVFLNTVRKQ…ISTIMPGQPV (61 aa)) folds into the Sm domain.

It belongs to the Hfq family. In terms of assembly, homohexamer.

RNA chaperone that binds small regulatory RNA (sRNAs) and mRNAs to facilitate mRNA translational regulation in response to envelope stress, environmental stress and changes in metabolite concentrations. Also binds with high specificity to tRNAs. The chain is RNA-binding protein Hfq from Bartonella tribocorum (strain CIP 105476 / IBS 506).